The sequence spans 549 residues: Adhesion G protein-coupled receptor G3 (549 aa).

Residues methionine 1–glycine 20 form the signal peptide. At glutamine 21–arginine 270 the chain is on the extracellular side. N-linked (GlcNAc...) asparagine glycosylation is found at asparagine 98, asparagine 144, and asparagine 210. Positions phenylalanine 107–glutamine 262 constitute a GAIN-B domain. Cystine bridges form between cysteine 215/cysteine 244 and cysteine 233/cysteine 246. A GPS region spans residues cysteine 215 to glutamine 262. The tract at residues phenylalanine 251–threonine 259 is stachel. Residues isoleucine 271–leucine 295 form a helical membrane-spanning segment. Residues serine 296–aspartate 304 are Cytoplasmic-facing. Residues alanine 305–asparagine 326 traverse the membrane as a helical segment. Residues valine 327–cysteine 338 are Extracellular-facing. An intrachain disulfide couples cysteine 338 to cysteine 420. Residues tryptophan 339 to tyrosine 364 form a helical membrane-spanning segment. Over leucine 365 to tyrosine 378 the chain is Cytoplasmic. A helical membrane pass occupies residues phenylalanine 379 to alanine 400. Over asparagine 401 to methionine 428 the chain is Extracellular. A glycan (N-linked (GlcNAc...) asparagine) is linked at asparagine 413. A helical transmembrane segment spans residues tyrosine 429–valine 454. The Cytoplasmic portion of the chain corresponds to tryptophan 455–lysine 474. A helical membrane pass occupies residues lysine 475–phenylalanine 495. At threonine 496–serine 501 the chain is on the extracellular side. A helical transmembrane segment spans residues threonine 502–tyrosine 525. Asparagine 510 is a cortisol binding site. Topologically, residues leucine 526–glutamate 549 are cytoplasmic.

Belongs to the G-protein coupled receptor 2 family. Adhesion G-protein coupled receptor (ADGR) subfamily. As to quaternary structure, heterodimer of 2 chains generated by proteolytic processing; the large extracellular N-terminal fragment and the membrane-bound C-terminal fragment predominantly remain associated and non-covalently linked. Interacts with PRTN3; this interaction induces the activation of PAR2. Interacts with GNAO1 (when palmitoylated). In terms of processing, autoproteolytically processed at the GPS region of the GAIN-B domain; this cleavage modulates receptor activity. O- and N-glycosylated. Expressed in cultured primary dermal lymphatic endothelial cells. Highly expressed in polymorphonuclear cells (PMNs) including neutrophilic, eosinophilic, and basophilic granulocytes.

It localises to the cell membrane. Its activity is regulated as follows. Forms a heterodimer of 2 chains generated by proteolytic processing that remain associated through non-covalent interactions mediated by the GAIN-B domain. In the inactivated receptor, the Stachel sequence (also named stalk) is embedded in the GAIN-B domain, where it adopts a beta-strand conformation. On activation, the Stachel moves into the 7 transmembrane region and adopts a twisted hook-shaped configuration that forms contacts within the receptor, leading to coupling of a G-alpha protein, which activates signaling. The cleaved GAIN-B and N-terminal domains can then dissociate from the rest of the receptor. In terms of biological role, adhesion G-protein coupled receptor (aGPCR) for glucocorticoid hormones such as cortisol, cortisone and 11-deoxycortisol. Ligand binding causes a conformation change that triggers signaling via guanine nucleotide-binding proteins (G proteins) and modulates the activity of downstream effectors, such as adenylate cyclase. ADGRG3/GPR97 is coupled to G(o)/GNAO1 G proteins and mediates signaling by inhibiting adenylate cyclase activity. May also signal through G-alpha(q)-proteins; additional evidence are however required to confirm this result in vivo. Plays a role in the regulation of various processes including B-cell development, inflammation or innate immunity. Regulates migration of lymphatic endothelial cells in vitro via the small GTPases RhoA and CDC42. Antibody ligation leads to the production and activation of antimicrobial mediators like reactive oxygen species (ROS) and myeloperoxidase (MPO) as well as enhanced bacteria uptake and killing by granulocytes. Additionally, collaborates with protease-activated receptor 2/PAR2 to stimulate neutrophil-driven antimicrobial responses and endothelial cell activation. This chain is Adhesion G protein-coupled receptor G3, found in Homo sapiens (Human).